Reading from the N-terminus, the 408-residue chain is LL-diaminopimelate aminotransferase (408 aa).

Residues Tyr-15 and Gly-42 each contribute to the substrate site. Pyridoxal 5'-phosphate is bound by residues Tyr-72, 108–109 (SK), Tyr-132, Asn-187, Tyr-218, and 246–248 (SFS). Lys-109, Tyr-132, and Asn-187 together coordinate substrate. Lys-249 is modified (N6-(pyridoxal phosphate)lysine). Arg-257 and Asn-292 together coordinate pyridoxal 5'-phosphate. Substrate contacts are provided by Asn-292 and Arg-388.

Belongs to the class-I pyridoxal-phosphate-dependent aminotransferase family. LL-diaminopimelate aminotransferase subfamily. In terms of assembly, homodimer. Pyridoxal 5'-phosphate serves as cofactor.

The enzyme catalyses (2S,6S)-2,6-diaminopimelate + 2-oxoglutarate = (S)-2,3,4,5-tetrahydrodipicolinate + L-glutamate + H2O + H(+). The protein operates within amino-acid biosynthesis; L-lysine biosynthesis via DAP pathway; LL-2,6-diaminopimelate from (S)-tetrahydrodipicolinate (aminotransferase route): step 1/1. Involved in the synthesis of meso-diaminopimelate (m-DAP or DL-DAP), required for both lysine and peptidoglycan biosynthesis. Catalyzes the direct conversion of tetrahydrodipicolinate to LL-diaminopimelate. This chain is LL-diaminopimelate aminotransferase, found in Prochlorococcus marinus (strain AS9601).